The primary structure comprises 472 residues: Adenosylhomocysteinase (472 aa).

Positions 64, 138, and 198 each coordinate substrate. 199–201 (TTT) is an NAD(+) binding site. Substrate-binding residues include lysine 228 and aspartate 232. NAD(+)-binding positions include asparagine 233, 262 to 267 (GFGDVG), glutamate 285, asparagine 320, 341 to 343 (IGH), and asparagine 386.

The protein belongs to the adenosylhomocysteinase family. NAD(+) is required as a cofactor.

The protein resides in the cytoplasm. It catalyses the reaction S-adenosyl-L-homocysteine + H2O = L-homocysteine + adenosine. It functions in the pathway amino-acid biosynthesis; L-homocysteine biosynthesis; L-homocysteine from S-adenosyl-L-homocysteine: step 1/1. Its function is as follows. May play a key role in the regulation of the intracellular concentration of adenosylhomocysteine. The protein is Adenosylhomocysteinase of Prochlorococcus marinus (strain MIT 9215).